Reading from the N-terminus, the 262-residue chain is Ribosome biogenesis GTPase A (262 aa).

A CP-type G domain is found at 12-157; it reads KRQIKDLLRL…ILDTPGILYK (146 aa). GTP contacts are provided by residues 54–57, 109–114, and Gly153; these read NKVD and NTGKST.

The protein belongs to the TRAFAC class YlqF/YawG GTPase family. MTG1 subfamily.

The protein localises to the cytoplasm. Functionally, required for a late step of 50S ribosomal subunit assembly. Has GTPase activity. Binds to the 23S rRNA. The protein is Ribosome biogenesis GTPase A of Thermotoga maritima (strain ATCC 43589 / DSM 3109 / JCM 10099 / NBRC 100826 / MSB8).